A 350-amino-acid polypeptide reads, in one-letter code: MNILADALLPGLDSAFPPPFTVTLYHKADEIPELLHHKDVLLCRSTLKINGDLLKHHQIKVVATATSGTDHIDFPFLESQNISIIDAKGCNATSVADYVVACLAYLDKQQLIQGKTAGIIGLGQVGTKVYERLNAAEFQLCLYDPPKATRDTSFQSCSLEDLLECDFLCVHAELHSNAPYPSLNLINRDFLKELKPGCIIINASRGGIINEEALLHLGSAILYCTDVYNNEPHIDNRIVSRATLCTPHIAGHSLEAKFAAVAIVSRKLHQMLGLPYPQFATPEKPYRLNDDSNWRELALSIYNPIHETLELKHAGNLSSAFLTLRKNHHHRHDFTTYFDSDSIKKYPLLG.

The substrate site is built by S45 and T66. NAD(+) is bound by residues 124 to 125, D144, 203 to 205, and D226; these read QV and ASR. The active site involves R205. The active site involves E231. H248 (proton donor) is an active-site residue. Residue G251 coordinates NAD(+).

It belongs to the D-isomer specific 2-hydroxyacid dehydrogenase family. PdxB subfamily. As to quaternary structure, homodimer.

It localises to the cytoplasm. It carries out the reaction 4-phospho-D-erythronate + NAD(+) = (R)-3-hydroxy-2-oxo-4-phosphooxybutanoate + NADH + H(+). It functions in the pathway cofactor biosynthesis; pyridoxine 5'-phosphate biosynthesis; pyridoxine 5'-phosphate from D-erythrose 4-phosphate: step 2/5. Its function is as follows. Catalyzes the oxidation of erythronate-4-phosphate to 3-hydroxy-2-oxo-4-phosphonooxybutanoate. This is Erythronate-4-phosphate dehydrogenase from Legionella pneumophila (strain Lens).